A 344-amino-acid chain; its full sequence is GTP 3',8-cyclase (344 aa).

Residues 19-239 enclose the Radical SAM core domain; sequence PFGRTIDYLR…ANYTLTDLPD (221 aa). Position 28 (R28) interacts with GTP. C35 and C39 together coordinate [4Fe-4S] cluster. Residue Y41 participates in S-adenosyl-L-methionine binding. A [4Fe-4S] cluster-binding site is contributed by C42. R77 lines the GTP pocket. Residue G81 participates in S-adenosyl-L-methionine binding. GTP is bound at residue T111. An S-adenosyl-L-methionine-binding site is contributed by S135. K171 provides a ligand contact to GTP. Residue M205 participates in S-adenosyl-L-methionine binding. Residues C268 and C271 each contribute to the [4Fe-4S] cluster site. A GTP-binding site is contributed by 273–275; sequence RVR. C285 is a binding site for [4Fe-4S] cluster.

Belongs to the radical SAM superfamily. MoaA family. As to quaternary structure, monomer and homodimer. The cofactor is [4Fe-4S] cluster.

The catalysed reaction is GTP + AH2 + S-adenosyl-L-methionine = (8S)-3',8-cyclo-7,8-dihydroguanosine 5'-triphosphate + 5'-deoxyadenosine + L-methionine + A + H(+). Its pathway is cofactor biosynthesis; molybdopterin biosynthesis. Its function is as follows. Catalyzes the cyclization of GTP to (8S)-3',8-cyclo-7,8-dihydroguanosine 5'-triphosphate. In Rhodopseudomonas palustris (strain ATCC BAA-98 / CGA009), this protein is GTP 3',8-cyclase.